Reading from the N-terminus, the 426-residue chain is Zinc finger CCCH domain-containing protein 15 (426 aa).

The span at 1-12 (MPPKKQAQAGGS) shows a compositional bias: low complexity. Disordered stretches follow at residues 1–30 (MPPKKQAQAGGSKKAEQKKKEKIIEDKTFG) and 53–74 (GQQNPRQVAQSEAEKKLKKDDK). Basic and acidic residues predominate over residues 13–29 (KKAEQKKKEKIIEDKTF). Positions 53-62 (GQQNPRQVAQ) are enriched in polar residues. Residues 61-86 (AQSEAEKKLKKDDKKKELQELNELFK) are a coiled coil. Residues 64-74 (EAEKKLKKDDK) are compositionally biased toward basic and acidic residues. C3H1-type zinc fingers lie at residues 99 to 126 (DPKSVVCAFFKQGQCTKGDKCKFSHDLT) and 174 to 212 (PKTQIVCKHFLEAIENNKYGWFWVCPGGGDICMYRHALP). Residues 218–285 (KKDKKKEEKE…RRKADFKAGK (68 aa)) are a coiled coil. Phosphoserine is present on S231. The interval 236 to 260 (IERERSALGPNVTKITLESFLAWKK) is required for interaction with DRG1. The segment at 299–326 (PELVNDDDEEADDTRYTQGTGGDEVDDS) is disordered. 3 positions are modified to phosphoserine: S351, S360, and S381. The disordered stretch occupies residues 358 to 411 (YTSDKDENKLSEASGGRAENGERSDLEEDNEREGTENGAIDAVPVDENLFTGED).

This sequence belongs to the ZC3H15/TMA46 family. Interacts with DRG1; this interaction prevents DRG1 poly-ubiquitination and degradation by proteasome. DRG1-ZC3H15/DFRP1 complex co-sediments with polysomes. Associates with microtubules.

The protein resides in the cytoplasm. The protein localises to the nucleus. In terms of biological role, protects DRG1 from proteolytic degradation. Stimulates DRG1 GTPase activity likely by increasing the affinity for the potassium ions. This Homo sapiens (Human) protein is Zinc finger CCCH domain-containing protein 15 (ZC3H15).